A 75-amino-acid polypeptide reads, in one-letter code: Putative DNA-directed RNA polymerase subunit omega (75 aa).

Belongs to the RNA polymerase subunit omega family.

Its subcellular location is the plastid. It localises to the chloroplast. The catalysed reaction is RNA(n) + a ribonucleoside 5'-triphosphate = RNA(n+1) + diphosphate. In terms of biological role, may be involved in RNA polymerase activity. The sequence is that of Putative DNA-directed RNA polymerase subunit omega (rpoZ) from Mesostigma viride (Green alga).